A 418-amino-acid chain; its full sequence is Tyrosine--tRNA ligase (418 aa).

Tyr-34 contributes to the L-tyrosine binding site. Residues 39–48 (PTGDSMHIGH) carry the 'HIGH' region motif. 2 residues coordinate L-tyrosine: Tyr-166 and Gln-170. The short motif at 228-232 (KFGKT) is the 'KMSKS' region element. Lys-231 serves as a coordination point for ATP. An S4 RNA-binding domain is found at 350–417 (TNIVELLTET…KKNYFLAKVK (68 aa)).

The protein belongs to the class-I aminoacyl-tRNA synthetase family. TyrS type 1 subfamily. In terms of assembly, homodimer.

It is found in the cytoplasm. It catalyses the reaction tRNA(Tyr) + L-tyrosine + ATP = L-tyrosyl-tRNA(Tyr) + AMP + diphosphate + H(+). In terms of biological role, catalyzes the attachment of tyrosine to tRNA(Tyr) in a two-step reaction: tyrosine is first activated by ATP to form Tyr-AMP and then transferred to the acceptor end of tRNA(Tyr). The sequence is that of Tyrosine--tRNA ligase from Levilactobacillus brevis (Lactobacillus brevis).